Reading from the N-terminus, the 944-residue chain is Weak acid resistance protein 1 (944 aa).

The segment at residues 76 to 109 (CVCCHSLKQKCEPSDVNDIYRKPCRRCLKHKKLC) is a DNA-binding region (zn(2)-C6 fungal-type). 2 disordered regions span residues 114–171 (SKRT…AKQF) and 197–225 (SYGAREAETTSTGEITTNNHTKSNGSVPT). Residue Thr-128 is modified to Phosphothreonine. 2 stretches are compositionally biased toward polar residues: residues 135–144 (VNVSTKSKGP) and 205–225 (TTSTGEITTNNHTKSNGSVPT).

In terms of assembly, homodimer. Post-translationally, phosphorylation is required for PDR12 induction.

The protein localises to the nucleus. Its function is as follows. transcription factor which binds to a weak acid response element (WARE) to mediate stress induction of PDR12 and FUN34, encoding an acid transporter and a putative ammonia transporter, respectively. The polypeptide is Weak acid resistance protein 1 (WAR1) (Saccharomyces cerevisiae (strain ATCC 204508 / S288c) (Baker's yeast)).